The following is a 131-amino-acid chain: Nuclear envelope phosphatase-regulatory subunit 1 homolog (131 aa).

Transmembrane regions (helical) follow at residues 33–53 and 68–88; these read LLAV…WYWL and WIHP…ILGI.

This sequence belongs to the CNEP1R1 family.

Its subcellular location is the nucleus membrane. The protein resides in the cytoplasm. May form with the serine/threonine protein phosphatase l(1)G0269 an active complex dephosphorylating and activating lipin-like phosphatases. Lipins are phosphatidate phosphatases that catalyze the conversion of phosphatidic acid to diacylglycerol and control the metabolism of fatty acids at different levels. This is Nuclear envelope phosphatase-regulatory subunit 1 homolog from Drosophila melanogaster (Fruit fly).